Here is a 1081-residue protein sequence, read N- to C-terminus: Zinc finger protein 827 (1081 aa).

Basic and acidic residues predominate over residues methionine 1–lysine 10. The segment at methionine 1–serine 14 is mediates direct interaction with RBBP4. Residues methionine 1–serine 77 form a disordered region. An RRK motif; mediates NuRD recruitment to telomeres motif is present at residues arginine 3 to lysine 5. A compositionally biased stretch (polar residues) spans glutamate 62–serine 77. Glycyl lysine isopeptide (Lys-Gly) (interchain with G-Cter in SUMO2) cross-links involve residues lysine 176, lysine 216, and lysine 226. Disordered stretches follow at residues lysine 259 to phenylalanine 278 and serine 307 to leucine 348. Over residues valine 327–glutamine 344 the composition is skewed to pro residues. Glycyl lysine isopeptide (Lys-Gly) (interchain with G-Cter in SUMO2) cross-links involve residues lysine 360 and lysine 372. C2H2-type zinc fingers lie at residues phenylalanine 374–histidine 396, histidine 402–histidine 424, and phenylalanine 433–histidine 455. Residues lysine 466, lysine 475, lysine 523, lysine 549, lysine 580, lysine 587, lysine 597, lysine 634, lysine 639, and lysine 658 each participate in a glycyl lysine isopeptide (Lys-Gly) (interchain with G-Cter in SUMO2) cross-link. Lysine 673 is covalently cross-linked (Glycyl lysine isopeptide (Lys-Gly) (interchain with G-Cter in SUMO1); alternate). Lysine 673 is covalently cross-linked (Glycyl lysine isopeptide (Lys-Gly) (interchain with G-Cter in SUMO2); alternate). Glycyl lysine isopeptide (Lys-Gly) (interchain with G-Cter in SUMO2) cross-links involve residues lysine 704, lysine 710, lysine 742, lysine 778, and lysine 798. C2H2-type zinc fingers lie at residues phenylalanine 817–histidine 839 and tyrosine 845–histidine 867. Glycyl lysine isopeptide (Lys-Gly) (interchain with G-Cter in SUMO2) cross-links involve residues lysine 870 and lysine 891. 2 consecutive C2H2-type zinc fingers follow at residues tyrosine 897–histidine 919 and isoleucine 929–histidine 952. The span at histidine 947–proline 960 shows a compositional bias: basic and acidic residues. The interval histidine 947–leucine 996 is disordered. A Glycyl lysine isopeptide (Lys-Gly) (interchain with G-Cter in SUMO2) cross-link involves residue lysine 958. The segment covering serine 961–alanine 978 has biased composition (low complexity). The segment covering asparagine 979 to glutamine 988 has biased composition (basic and acidic residues). Lysine 1014 is covalently cross-linked (Glycyl lysine isopeptide (Lys-Gly) (interchain with G-Cter in SUMO2)). C2H2-type zinc fingers lie at residues phenylalanine 1019–histidine 1041 and phenylalanine 1047–histidine 1069.

This sequence belongs to the krueppel C2H2-type zinc-finger protein family. In terms of assembly, part of a transcription inhibitory ribonucleoprotein complex composed at least of the circular RNA circZNF827, HNRNPK and HNRNPL. Interacts with the nucleosome remodeling and histone deacetylase/NuRD complex. Interacts with RBBP4; the interaction is direct and recruits RBBP4, a component of the NuRD complex, to telomeres.

It is found in the nucleus. It localises to the chromosome. Its subcellular location is the telomere. In terms of biological role, as part of a ribonucleoprotein complex composed at least of HNRNPK, HNRNPL and the circular RNA circZNF827 that nucleates the complex on chromatin, may negatively regulate the transcription of genes involved in neuronal differentiation. Could also recruit the nucleosome remodeling and histone deacetylase/NuRD complex to telomeric regions of chromosomes to regulate chromatin remodeling as part of telomere maintenance. The sequence is that of Zinc finger protein 827 (ZNF827) from Homo sapiens (Human).